A 397-amino-acid polypeptide reads, in one-letter code: Carbamoyl phosphate synthase small chain (397 aa).

Residues 1–204 (MSPLLPSFPF…PAYRTLDTSK (204 aa)) are CPSase. The L-glutamine site is built by Ser53, Gly256, and Gly258. In terms of domain architecture, Glutamine amidotransferase type-1 spans 208 to 395 (KVVAYDFGVK…MELMNAAKKE (188 aa)). Catalysis depends on Cys284, which acts as the Nucleophile. L-glutamine-binding residues include Leu285, Gln288, Asn326, Gly328, and Phe329. Residues His368 and Glu370 contribute to the active site.

This sequence belongs to the CarA family. In terms of assembly, composed of two chains; the small (or glutamine) chain promotes the hydrolysis of glutamine to ammonia, which is used by the large (or ammonia) chain to synthesize carbamoyl phosphate. Tetramer of heterodimers (alpha,beta)4.

It carries out the reaction hydrogencarbonate + L-glutamine + 2 ATP + H2O = carbamoyl phosphate + L-glutamate + 2 ADP + phosphate + 2 H(+). The enzyme catalyses L-glutamine + H2O = L-glutamate + NH4(+). Its pathway is amino-acid biosynthesis; L-arginine biosynthesis; carbamoyl phosphate from bicarbonate: step 1/1. The protein operates within pyrimidine metabolism; UMP biosynthesis via de novo pathway; (S)-dihydroorotate from bicarbonate: step 1/3. Small subunit of the glutamine-dependent carbamoyl phosphate synthetase (CPSase). CPSase catalyzes the formation of carbamoyl phosphate from the ammonia moiety of glutamine, carbonate, and phosphate donated by ATP, constituting the first step of 2 biosynthetic pathways, one leading to arginine and/or urea and the other to pyrimidine nucleotides. The small subunit (glutamine amidotransferase) binds and cleaves glutamine to supply the large subunit with the substrate ammonia. This chain is Carbamoyl phosphate synthase small chain, found in Polynucleobacter asymbioticus (strain DSM 18221 / CIP 109841 / QLW-P1DMWA-1) (Polynucleobacter necessarius subsp. asymbioticus).